The following is a 92-amino-acid chain: Protease inhibitors (92 aa).

A signal peptide spans 1–19; that stretch reads MKFALALCAAVLLVVLVQA. Pacifastin domains follow at residues 20 to 54 and 57 to 92; these read EEKC…CQPA and EISC…CPNQ. Intrachain disulfides connect cysteine 23/cysteine 38, cysteine 33/cysteine 51, cysteine 36/cysteine 46, cysteine 60/cysteine 75, cysteine 70/cysteine 89, and cysteine 73/cysteine 84. O-linked (Fuc) threonine glycosylation occurs at threonine 65.

Belongs to the protease inhibitor I19 family. As to expression, brain and fat body.

Its subcellular location is the secreted. Both LCMI I and II are inhibitors of chymotrypsin and elastase (in vitro). They both inhibit the prophenol oxidase activation cascade. The chain is Protease inhibitors from Locusta migratoria (Migratory locust).